A 468-amino-acid chain; its full sequence is Glutamate--tRNA ligase (468 aa).

The 'HIGH' region motif lies at 11–21 (PSPTGFIHLGN). The short motif at 243–247 (KMSKR) is the 'KMSKS' region element. ATP is bound at residue K246.

The protein belongs to the class-I aminoacyl-tRNA synthetase family. Glutamate--tRNA ligase type 1 subfamily. As to quaternary structure, monomer.

It localises to the cytoplasm. It catalyses the reaction tRNA(Glu) + L-glutamate + ATP = L-glutamyl-tRNA(Glu) + AMP + diphosphate. Its function is as follows. Catalyzes the attachment of glutamate to tRNA(Glu) in a two-step reaction: glutamate is first activated by ATP to form Glu-AMP and then transferred to the acceptor end of tRNA(Glu). The chain is Glutamate--tRNA ligase from Cupriavidus pinatubonensis (strain JMP 134 / LMG 1197) (Cupriavidus necator (strain JMP 134)).